An 802-amino-acid polypeptide reads, in one-letter code: Outer membrane usher protein CssD (802 aa).

The protein belongs to the fimbrial export usher family.

It localises to the cell outer membrane. In terms of biological role, involved in the export and assembly of C6 fimbrial subunits across the outer membrane. The chain is Outer membrane usher protein CssD (cssD) from Escherichia coli.